Reading from the N-terminus, the 817-residue chain is Anaphase-promoting complex subunit 4 (817 aa).

Residue tyrosine 469 is modified to Phosphotyrosine. Phosphoserine is present on residues serine 757 and serine 758. Lysine 772 is covalently cross-linked (Glycyl lysine isopeptide (Lys-Gly) (interchain with G-Cter in SUMO2)). Serine 777 and serine 779 each carry phosphoserine. Residue lysine 798 forms a Glycyl lysine isopeptide (Lys-Gly) (interchain with G-Cter in SUMO2) linkage.

Belongs to the APC4 family. As to quaternary structure, the mammalian APC/C is composed at least of 14 distinct subunits ANAPC1, ANAPC2, CDC27/APC3, ANAPC4, ANAPC5, CDC16/APC6, ANAPC7, CDC23/APC8, ANAPC10, ANAPC11, CDC26/APC12, ANAPC13, ANAPC15 and ANAPC16 that assemble into a complex of at least 19 chains with a combined molecular mass of around 1.2 MDa; APC/C interacts with FZR1 and FBXO5. In the context of the APC/C complex, directly interacts with UBE2S.

It is found in the nucleus. Its pathway is protein modification; protein ubiquitination. In terms of biological role, component of the anaphase promoting complex/cyclosome (APC/C), a cell cycle-regulated E3 ubiquitin ligase that controls progression through mitosis and the G1 phase of the cell cycle. The APC/C complex acts by mediating ubiquitination and subsequent degradation of target proteins: it mainly mediates the formation of 'Lys-11'-linked polyubiquitin chains and, to a lower extent, the formation of 'Lys-48'- and 'Lys-63'-linked polyubiquitin chains. The APC/C complex catalyzes assembly of branched 'Lys-11'-/'Lys-48'-linked branched ubiquitin chains on target proteins. The polypeptide is Anaphase-promoting complex subunit 4 (ANAPC4) (Pongo abelii (Sumatran orangutan)).